Here is a 432-residue protein sequence, read N- to C-terminus: Glutamate-1-semialdehyde 2,1-aminomutase 1 (432 aa).

Position 268 is an N6-(pyridoxal phosphate)lysine (lysine 268).

This sequence belongs to the class-III pyridoxal-phosphate-dependent aminotransferase family. HemL subfamily. As to quaternary structure, homodimer. It depends on pyridoxal 5'-phosphate as a cofactor.

The protein localises to the cytoplasm. It catalyses the reaction (S)-4-amino-5-oxopentanoate = 5-aminolevulinate. Its pathway is porphyrin-containing compound metabolism; protoporphyrin-IX biosynthesis; 5-aminolevulinate from L-glutamyl-tRNA(Glu): step 2/2. The sequence is that of Glutamate-1-semialdehyde 2,1-aminomutase 1 from Bacillus mycoides (strain KBAB4) (Bacillus weihenstephanensis).